Here is a 438-residue protein sequence, read N- to C-terminus: AP-2 complex subunit mu (438 aa).

The 261-residue stretch at 177–437 folds into the MHD domain; that stretch reads KNEVFLDIVE…ITKAGSYEIR (261 aa).

Belongs to the adaptor complexes medium subunit family. In terms of assembly, adaptor protein complex 2 (AP-2) is a heterotetramer composed of two large adaptins (alpha-type and beta-type subunits), a medium adaptin (mu-type subunit) and a small adaptin (sigma-type subunit).

Its subcellular location is the cell membrane. The protein localises to the membrane. The protein resides in the coated pit. It is found in the golgi apparatus. It localises to the trans-Golgi network membrane. Functionally, subunit of the adaptor protein complex 2 (AP-2). Adaptor protein complexes function in protein transport via transport vesicles in different membrane traffic pathways. Adaptor protein complexes are vesicle coat components and appear to be involved in cargo selection and vesicle formation. AP-2 is involved in clathrin-dependent endocytosis in which cargo proteins are incorporated into vesicles surrounded by clathrin (clathrin-coated vesicles, CCVs) which are destined for fusion with the early endosome. AP-2 recognizes Y-X-X-Phi endocytosis signal motif within the cytosolic tails of transmembrane cargo molecules. The complex binds polyphosphoinositides. The sequence is that of AP-2 complex subunit mu (AP2M) from Arabidopsis thaliana (Mouse-ear cress).